The chain runs to 97 residues: Acylphosphatase (97 aa).

In terms of domain architecture, Acylphosphatase-like spans 5–92 (RAHVWISGRV…GEFVRFEITF (88 aa)). Catalysis depends on residues Arg-20 and Asn-38.

It belongs to the acylphosphatase family.

It catalyses the reaction an acyl phosphate + H2O = a carboxylate + phosphate + H(+). This is Acylphosphatase (acyP) from Syntrophobacter fumaroxidans (strain DSM 10017 / MPOB).